Reading from the N-terminus, the 293-residue chain is MNSTKENPVEIIRTRNELQARVRAWKQAGETVGFVPTMGALHEGHLSLIEKAQEKVTRTVASIFVNPAQFAPGEDFDTYPRREGEDIAKLASVNCDAVYLPTVAEMYPEGSVTNVRVESLSDLLDGIYRPHFFYGVATVVARLFLHAQPDVAVFGEKDYQQLQVIRRMVRDLGFPIEIIGGATRRDADGLAQSSRNLYLSPDERRAAGAIYSAMHRAASRMALGTLPSEALKEAEGYILTAGFRKIDYVTLVDPATLQALPADTPLEDGAAARLLAAAWIGKTRLIDNISVTR.

An ATP-binding site is contributed by 38-45 (MGALHEGH). The active-site Proton donor is H45. Q69 lines the (R)-pantoate pocket. Q69 lines the beta-alanine pocket. 155–158 (GEKD) is a binding site for ATP. Residue Q161 participates in (R)-pantoate binding. Residue 192 to 195 (QSSR) coordinates ATP.

It belongs to the pantothenate synthetase family. In terms of assembly, homodimer.

It is found in the cytoplasm. The enzyme catalyses (R)-pantoate + beta-alanine + ATP = (R)-pantothenate + AMP + diphosphate + H(+). The protein operates within cofactor biosynthesis; (R)-pantothenate biosynthesis; (R)-pantothenate from (R)-pantoate and beta-alanine: step 1/1. Catalyzes the condensation of pantoate with beta-alanine in an ATP-dependent reaction via a pantoyl-adenylate intermediate. The protein is Pantothenate synthetase of Hyphomonas neptunium (strain ATCC 15444).